We begin with the raw amino-acid sequence, 433 residues long: 5-methylthioadenosine/S-adenosylhomocysteine deaminase (433 aa).

The Zn(2+) site is built by His67 and His69. 3 residues coordinate substrate: Glu96, Arg148, and His186. Residue His213 participates in Zn(2+) binding. Glu216 and Asp301 together coordinate substrate. Asp301 contacts Zn(2+).

The protein belongs to the metallo-dependent hydrolases superfamily. MTA/SAH deaminase family. Zn(2+) is required as a cofactor.

It catalyses the reaction S-adenosyl-L-homocysteine + H2O + H(+) = S-inosyl-L-homocysteine + NH4(+). The catalysed reaction is S-methyl-5'-thioadenosine + H2O + H(+) = S-methyl-5'-thioinosine + NH4(+). Functionally, catalyzes the deamination of 5-methylthioadenosine and S-adenosyl-L-homocysteine into 5-methylthioinosine and S-inosyl-L-homocysteine, respectively. Is also able to deaminate adenosine. In Desulforamulus reducens (strain ATCC BAA-1160 / DSM 100696 / MI-1) (Desulfotomaculum reducens), this protein is 5-methylthioadenosine/S-adenosylhomocysteine deaminase.